The chain runs to 351 residues: Phosphoribosylformylglycinamidine cyclo-ligase (351 aa).

This sequence belongs to the AIR synthase family.

Its subcellular location is the cytoplasm. The catalysed reaction is 2-formamido-N(1)-(5-O-phospho-beta-D-ribosyl)acetamidine + ATP = 5-amino-1-(5-phospho-beta-D-ribosyl)imidazole + ADP + phosphate + H(+). It functions in the pathway purine metabolism; IMP biosynthesis via de novo pathway; 5-amino-1-(5-phospho-D-ribosyl)imidazole from N(2)-formyl-N(1)-(5-phospho-D-ribosyl)glycinamide: step 2/2. In Burkholderia pseudomallei (strain 1710b), this protein is Phosphoribosylformylglycinamidine cyclo-ligase.